A 60-amino-acid polypeptide reads, in one-letter code: Large ribosomal subunit protein bL32 (60 aa).

Basic residues predominate over residues 1–16 (MAVPRRKTSPSRRGMR). Residues 1–60 (MAVPRRKTSPSRRGMRRSADAIKKPTYAEDKDSGELRRPHHLDLKTGMYKGRQVLIKKES) form a disordered region. Over residues 17-44 (RSADAIKKPTYAEDKDSGELRRPHHLDL) the composition is skewed to basic and acidic residues.

Belongs to the bacterial ribosomal protein bL32 family.

The protein is Large ribosomal subunit protein bL32 of Rhodopseudomonas palustris (strain BisA53).